A 166-amino-acid chain; its full sequence is Lactose-binding lectin l-2 (166 aa).

The signal sequence occupies residues Met-1–Gly-24. 3 disulfides stabilise this stretch: Cys-34/Cys-45, Cys-62/Cys-160, and Cys-136/Cys-152. Residues His-41–Val-161 form the C-type lectin domain.

In terms of assembly, homodimer; disulfide-linked. Skin; contained within club cells which are a component of the epidermis in combination with epithelial cells and mucus cells (at protein level).

The protein localises to the secreted. In terms of biological role, involved in host defense at the body surface. Causes agglutination and suppresses the growth of the Gram-negative bacterium E.coli K12. Possesses calcium-independent hemagglutinating activity. In Anguilla japonica (Japanese eel), this protein is Lactose-binding lectin l-2.